Consider the following 89-residue polypeptide: Acylphosphatase (89 aa).

An Acylphosphatase-like domain is found at 4 to 89 (SRRFLVSGTV…EQPPEGFRVL (86 aa)). Residues arginine 19 and asparagine 37 contribute to the active site.

Belongs to the acylphosphatase family.

It carries out the reaction an acyl phosphate + H2O = a carboxylate + phosphate + H(+). This chain is Acylphosphatase (acyP), found in Alkalilimnicola ehrlichii (strain ATCC BAA-1101 / DSM 17681 / MLHE-1).